A 103-amino-acid polypeptide reads, in one-letter code: Large ribosomal subunit protein bL21 (103 aa).

The protein belongs to the bacterial ribosomal protein bL21 family. In terms of assembly, part of the 50S ribosomal subunit. Contacts protein L20.

Its function is as follows. This protein binds to 23S rRNA in the presence of protein L20. The protein is Large ribosomal subunit protein bL21 of Mycobacterium leprae (strain Br4923).